A 330-amino-acid chain; its full sequence is 4-hydroxythreonine-4-phosphate dehydrogenase (330 aa).

Positions 136 and 137 each coordinate substrate. A divalent metal cation contacts are provided by H166, H211, and H266. The substrate site is built by K274, N283, and R292.

This sequence belongs to the PdxA family. In terms of assembly, homodimer. Zn(2+) serves as cofactor. The cofactor is Mg(2+). Requires Co(2+) as cofactor.

Its subcellular location is the cytoplasm. The enzyme catalyses 4-(phosphooxy)-L-threonine + NAD(+) = 3-amino-2-oxopropyl phosphate + CO2 + NADH. The protein operates within cofactor biosynthesis; pyridoxine 5'-phosphate biosynthesis; pyridoxine 5'-phosphate from D-erythrose 4-phosphate: step 4/5. Its function is as follows. Catalyzes the NAD(P)-dependent oxidation of 4-(phosphooxy)-L-threonine (HTP) into 2-amino-3-oxo-4-(phosphooxy)butyric acid which spontaneously decarboxylates to form 3-amino-2-oxopropyl phosphate (AHAP). This chain is 4-hydroxythreonine-4-phosphate dehydrogenase, found in Erwinia tasmaniensis (strain DSM 17950 / CFBP 7177 / CIP 109463 / NCPPB 4357 / Et1/99).